We begin with the raw amino-acid sequence, 702 residues long: Elongation factor G (702 aa).

A tr-type G domain is found at Ala8 to Thr290. GTP contacts are provided by residues Ala17 to Thr24, Asp88 to His92, and Asn142 to Asp145.

The protein belongs to the TRAFAC class translation factor GTPase superfamily. Classic translation factor GTPase family. EF-G/EF-2 subfamily.

The protein localises to the cytoplasm. Catalyzes the GTP-dependent ribosomal translocation step during translation elongation. During this step, the ribosome changes from the pre-translocational (PRE) to the post-translocational (POST) state as the newly formed A-site-bound peptidyl-tRNA and P-site-bound deacylated tRNA move to the P and E sites, respectively. Catalyzes the coordinated movement of the two tRNA molecules, the mRNA and conformational changes in the ribosome. The chain is Elongation factor G from Photorhabdus laumondii subsp. laumondii (strain DSM 15139 / CIP 105565 / TT01) (Photorhabdus luminescens subsp. laumondii).